A 268-amino-acid chain; its full sequence is Homeobox protein Hox-D12 (268 aa).

Residues threonine 102–serine 124 are disordered. Residues alanine 200–valine 259 constitute a DNA-binding region (homeobox).

This sequence belongs to the Abd-B homeobox family.

Its subcellular location is the nucleus. Its function is as follows. Sequence-specific transcription factor which is part of a developmental regulatory system that provides cells with specific positional identities on the anterior-posterior axis. This chain is Homeobox protein Hox-D12 (Hoxd12), found in Mus musculus (Mouse).